A 172-amino-acid chain; its full sequence is Translation initiation factor IF-3 (172 aa).

The protein belongs to the IF-3 family. As to quaternary structure, monomer.

It localises to the cytoplasm. IF-3 binds to the 30S ribosomal subunit and shifts the equilibrium between 70S ribosomes and their 50S and 30S subunits in favor of the free subunits, thus enhancing the availability of 30S subunits on which protein synthesis initiation begins. The sequence is that of Translation initiation factor IF-3 from Bartonella quintana (strain Toulouse) (Rochalimaea quintana).